A 59-amino-acid polypeptide reads, in one-letter code: Large ribosomal subunit protein uL30 (59 aa).

It belongs to the universal ribosomal protein uL30 family. As to quaternary structure, part of the 50S ribosomal subunit.

In Alkaliphilus metalliredigens (strain QYMF), this protein is Large ribosomal subunit protein uL30.